The primary structure comprises 233 residues: Ribonuclease 3 (233 aa).

The region spanning 4-126 (LNKLMERLGH…IVGSIYIDAG (123 aa)) is the RNase III domain. Glutamate 39 contributes to the Mg(2+) binding site. Aspartate 43 is an active-site residue. Residues aspartate 112 and glutamate 115 each coordinate Mg(2+). Residue glutamate 115 is part of the active site. One can recognise a DRBM domain in the interval 153-222 (DAKSLLQEWL…AKRFLELLDD (70 aa)).

This sequence belongs to the ribonuclease III family. As to quaternary structure, homodimer. Requires Mg(2+) as cofactor.

The protein resides in the cytoplasm. The catalysed reaction is Endonucleolytic cleavage to 5'-phosphomonoester.. Digests double-stranded RNA. Involved in the processing of primary rRNA transcript to yield the immediate precursors to the large and small rRNAs (23S and 16S). Processes some mRNAs, and tRNAs when they are encoded in the rRNA operon. Processes pre-crRNA and tracrRNA of type II CRISPR loci if present in the organism. In Coxiella burnetii (strain CbuG_Q212) (Coxiella burnetii (strain Q212)), this protein is Ribonuclease 3.